The primary structure comprises 143 residues: Transmembrane protein 80 (143 aa).

Helical transmembrane passes span 21–41, 55–75, 99–119, and 121–141; these read MLFY…LLMI, LVLD…RLYL, ALLS…DWAL, and ATLL…IAAF.

It is found in the membrane. The protein resides in the cell projection. Its subcellular location is the cilium. The sequence is that of Transmembrane protein 80 from Homo sapiens (Human).